A 129-amino-acid polypeptide reads, in one-letter code: MGPRGAPLLAVVLVLGLHALVEGEKPSPCRCSRLTPHNRKNCGFPGITSEQCFDLGCCFDSSVAGVPWCFHPLPNQESEQCVMEVSARKNCGYPGISPEDCASRNCCFSNLIFEVPWCFFPQSVEDCHY.

Positions 1-23 are cleaved as a signal peptide; the sequence is MGPRGAPLLAVVLVLGLHALVEG. P-type domains lie at 29–73 and 79–122; these read CRCS…FHPL and EQCV…FFPQ. 7 disulfides stabilise this stretch: cysteine 29–cysteine 127, cysteine 31–cysteine 58, cysteine 42–cysteine 57, cysteine 52–cysteine 69, cysteine 81–cysteine 107, cysteine 91–cysteine 106, and cysteine 101–cysteine 118.

In terms of tissue distribution, stomach and pancreas.

The protein resides in the secreted. Its function is as follows. Inhibits gastrointestinal motility and gastric acid secretion. Could function as a structural component of gastric mucus, possibly by stabilizing glycoproteins in the mucus gel through interactions with carbohydrate side chains. The sequence is that of Trefoil factor 2 (Tff2) from Mus musculus (Mouse).